Reading from the N-terminus, the 129-residue chain is 8-oxo-dGTP diphosphatase (129 aa).

The Nudix hydrolase domain maps to M1 to L129. 8-oxo-dGTP is bound by residues R23, H28, and E34 to G37. 2 residues coordinate Mg(2+): G37 and E57. A Nudix box motif is present at residues G38 to G59. N119 lines the 8-oxo-dGTP pocket.

This sequence belongs to the Nudix hydrolase family. As to quaternary structure, monomer. Requires Mg(2+) as cofactor.

The enzyme catalyses 8-oxo-dGTP + H2O = 8-oxo-dGMP + diphosphate + H(+). It catalyses the reaction 8-oxo-GTP + H2O = 8-oxo-GMP + diphosphate + H(+). The catalysed reaction is 8-oxo-dGDP + H2O = 8-oxo-dGMP + phosphate + H(+). It carries out the reaction 8-oxo-GDP + H2O = 8-oxo-GMP + phosphate + H(+). Specifically hydrolyzes both 8-oxo-deoxyguanosine triphosphate (8-oxo-dGTP) and 8-oxo-guanosine triphosphate (8-oxo-GTP) to the related monophosphates, thereby cleaning up the nucleotide pools and preventing misincorporation of 8-oxoGua into DNA and RNA. It prevents replicational errors by removing an oxidatively damaged form of guanine (8-oxo-dGTP) from DNA and the nucleotide pool. 8-oxo-dGTP can be inserted opposite dA and dC residues of template DNA with almost equal efficiency thus leading to A.T to G.C transversions. MutT may also ensure transcriptional fidelity, removing 8-oxo-GTP from the ribonucleotide triphosphate pool. However, due to the lower efficiency of RNA polymerase 8-oxo-GTP incorporation, MutT is probably not a major contributor to transcriptional fidelity. It also hydrolyzes 8-oxo-dGDP and 8-oxo-GDP to their monophosphate form. In vitro, can also use dGTP, dGDP and other various nucleoside di- and triphosphates, with much lower efficiency. Works cooperatively with MutM and MutY to prevent accumulation in the DNA of oxidized guanine residues. This Escherichia coli (strain K12) protein is 8-oxo-dGTP diphosphatase.